The sequence spans 1470 residues: Membrane-associated guanylate kinase, WW and PDZ domain-containing protein 3 (1470 aa).

A PDZ 1 domain is found at 18-108 (CAVSWAGPPG…PIRLKTVKPG (91 aa)). Residues 18–108 (CAVSWAGPPG…PIRLKTVKPG (91 aa)) are interaction with ADRB1 and TGFA. Residues 116-290 (RHYLSLQFQK…RSMDFRNYMM (175 aa)) form the Guanylate kinase-like domain. 123–130 (FQKGSIDH) serves as a coordination point for ATP. Residues 184-266 (TYDGNFYGTP…ETREMHSESS (83 aa)) are disordered. Residues 193-204 (PKPPAEPSPFQP) show a composition bias toward pro residues. Ser-236 is modified (phosphoserine). The segment covering 238 to 247 (LPEEEEDEDK) has biased composition (acidic residues). WW domains follow at residues 296 to 329 (EPLP…DPRL) and 342 to 375 (GELP…NPVE). Residues 413 to 495 (RASLKKSTMG…NQYVNLTLCR (83 aa)) enclose the PDZ 2 domain. The interval 413–495 (RASLKKSTMG…NQYVNLTLCR (83 aa)) is interaction with PTEN. Residues 550 to 575 (LLSSDRLNGPSDSNEQRASLASSGSS) form a disordered region. The span at 559–575 (PSDSNEQRASLASSGSS) shows a compositional bias: polar residues. In terms of domain architecture, PDZ 3 spans 581–657 (TIPLVKGPKG…GADVPLLILR (77 aa)). Ser-598 is subject to Phosphoserine. The tract at residues 665-700 (KTAKMKTDTKETSGSLETINEPTPQPMPFPPSIIRS) is disordered. Residues 676–686 (TSGSLETINEP) are compositionally biased toward polar residues. Residue Ser-702 is modified to Phosphoserine. The PDZ 4 domain maps to 729-811 (DVFLRKQESG…NGHVLLTVRR (83 aa)). An interaction with ADGRB1 region spans residues 729-811 (DVFLRKQESG…NGHVLLTVRR (83 aa)). Residues 818 to 847 (KQPEDESPQAFSQSGSPRLNRTELPTRSAP) are disordered. The segment covering 826–847 (QAFSQSGSPRLNRTELPTRSAP) has biased composition (polar residues). A phosphoserine mark is found at Ser-833 and Ser-916. In terms of domain architecture, PDZ 5 spans 852–939 (DVILQRKENE…TVTLTVVAEE (88 aa)). Residues 852 to 939 (DVILQRKENE…TVTLTVVAEE (88 aa)) are interaction with LPAR2 and GRIN2B. The segment at 939 to 976 (EEHHGPPSGTNSARQSPALQHRPMGQAQATHIPGDRTA) is disordered. Polar residues predominate over residues 946–956 (SGTNSARQSPA). The PDZ 6 domain occupies 1022 to 1104 (PVELERGPRG…KVLLLLRPGT (83 aa)). Disordered stretches follow at residues 1124–1146 (IYDE…ESHV) and 1167–1470 (DTVQ…DKQL). A compositionally biased stretch (polar residues) spans 1175–1191 (TLNGSQPEMKYQSIQKN). 2 stretches are compositionally biased toward basic and acidic residues: residues 1193–1209 (SKKD…KNLL) and 1230–1263 (RHSE…KGEN). Residues 1285-1304 (SSSPRKQQKIGGNSLSNTEG) show a composition bias toward polar residues. Position 1321 is a phosphoserine (Ser-1321). Composition is skewed to basic and acidic residues over residues 1326–1340 (PEGK…KDLK), 1350–1361 (RSPEKRSSKVDE), 1377–1397 (VSEK…DKTG), and 1422–1431 (EVTDRGKERA).

This sequence belongs to the MAGUK family. As to quaternary structure, interacts with ADRB1, ADGRB1, LPAR2/EDG4, FZD4, FZD7, GRIN2B, TGFA and VANGL2. Interacts with PTEN. Interacts with ADRB1, PTPRB and unidentified tyrosine phosphorylated proteins. Interacts with DLL1. Interacts with PRRG4 (via cytoplasmic domain).

It is found in the cell membrane. The protein resides in the cell junction. It localises to the tight junction. Its subcellular location is the nucleus. In terms of biological role, acts as a scaffolding protein at cell-cell junctions, thereby regulating various cellular and signaling processes. Cooperates with PTEN to modulate the kinase activity of AKT1. Its interaction with PTPRB and tyrosine phosphorylated proteins suggests that it may link receptor tyrosine phosphatase with its substrates at the plasma membrane. In polarized epithelial cells, involved in efficient trafficking of TGFA to the cell surface. Regulates the ability of LPAR2 to activate ERK and RhoA pathways. Regulates the JNK signaling cascade via its interaction with FZD4 and VANGL2. This Rattus norvegicus (Rat) protein is Membrane-associated guanylate kinase, WW and PDZ domain-containing protein 3 (Magi3).